Consider the following 360-residue polypeptide: Peptide chain release factor 1 (360 aa).

N5-methylglutamine is present on Gln235. Residues 284–313 (AKRQQAEASTRRNLLGSGDRSDRNRTYNFP) are disordered.

Belongs to the prokaryotic/mitochondrial release factor family. Post-translationally, methylated by PrmC. Methylation increases the termination efficiency of RF1.

Its subcellular location is the cytoplasm. In terms of biological role, peptide chain release factor 1 directs the termination of translation in response to the peptide chain termination codons UAG and UAA. This is Peptide chain release factor 1 from Salmonella arizonae (strain ATCC BAA-731 / CDC346-86 / RSK2980).